The following is a 358-amino-acid chain: Ion-translocating oxidoreductase complex subunit D (358 aa).

A run of 3 helical transmembrane segments spans residues 24–44 (ILAM…GVVL), 79–99 (LTAL…IIII), and 125–145 (IGYV…MPPI). An FMN phosphoryl threonine modification is found at threonine 186. The next 5 membrane-spanning stretches (helical) occupy residues 220–240 (FAQG…FLIL), 248–268 (IPVA…FTGF), 271–291 (LSAI…FIAT), 297–317 (SITP…VYLI), and 321–341 (GNYP…VPLI).

This sequence belongs to the NqrB/RnfD family. In terms of assembly, the complex is composed of six subunits: RnfA, RnfB, RnfC, RnfD, RnfE and RnfG. The cofactor is FMN.

The protein resides in the cell inner membrane. Part of a membrane-bound complex that couples electron transfer with translocation of ions across the membrane. This is Ion-translocating oxidoreductase complex subunit D from Haemophilus influenzae (strain ATCC 51907 / DSM 11121 / KW20 / Rd).